The following is a 196-amino-acid chain: Recombination protein RecR (196 aa).

The C4-type zinc-finger motif lies at Cys-55 to Cys-70. The region spanning Asp-78–Pro-173 is the Toprim domain.

Belongs to the RecR family.

In terms of biological role, may play a role in DNA repair. It seems to be involved in an RecBC-independent recombinational process of DNA repair. It may act with RecF and RecO. This chain is Recombination protein RecR, found in Neorickettsia sennetsu (strain ATCC VR-367 / Miyayama) (Ehrlichia sennetsu).